The chain runs to 555 residues: Wee1-like protein kinase 2 (555 aa).

Residues 1 to 112 form a disordered region; it reads MADTETDQGL…NFSTPKNSLG (112 aa). Phosphoserine; by CaMK2 and PKA is present on S15. The span at 26 to 41 shows a compositional bias: polar residues; sequence EGQMTAQDIGGAQSQK. The span at 57–72 shows a compositional bias: basic and acidic residues; that stretch reads TRDELHTSLSRDKESP. S71 carries the phosphoserine modification. Residues 102–112 are compositionally biased toward polar residues; the sequence is TNFSTPKNSLG. Residues 167-169 carry the Nuclear localization signal motif; the sequence is KRK. The Protein kinase domain maps to 208-485; sequence FFEIEKIGVG…ARSRILWPFL (278 aa). ATP-binding positions include 214–222 and K237; that span reads IGVGEFGTV. The Nuclear export signal motif lies at 310-324; it reads KLKDILLQISLGLKY. D334 (proton acceptor) is an active-site residue. Residues N339 and D375 each coordinate Mg(2+). Residues 488–514 are a coiled coil; it reads TDELQKQLNLEKSKTATLKRELKKARH.

It belongs to the protein kinase superfamily. Ser/Thr protein kinase family. WEE1 subfamily. In terms of processing, phosphorylated by PKA at Ser-15 in vitro, leading to activate kinase activity. Phosphorylation at Ser-15 by CaMK2, leading to increase its activity and promote metaphase II exit during egg activation. As to expression, ovary-specific.

Its subcellular location is the cytoplasm. The protein resides in the nucleus. It catalyses the reaction L-tyrosyl-[protein] + ATP = O-phospho-L-tyrosyl-[protein] + ADP + H(+). Functionally, oocyte-specific protein tyrosine kinase that phosphorylates and inhibits CDK1 and acts as a key regulator of meiosis during both prophase I and metaphase II. Required to maintain meiotic arrest in oocytes during the germinal vesicle (GV) stage, a long period of quiescence at dictyate prophase I, by phosphorylating CDK1 at 'Tyr-15', leading to inhibit CDK1 activity and prevent meiotic reentry. Also required for metaphase II exit during egg activation by phosphorylating CDK1 at 'Tyr-15', to ensure exit from meiosis in oocytes and promote pronuclear formation. The protein is Wee1-like protein kinase 2 (Wee2) of Mus musculus (Mouse).